We begin with the raw amino-acid sequence, 399 residues long: MAREKFERNKPHVNIGTIGHVDHGKTTLTAAITNVLAKKGQAQVQNYADIDGAPEERERGITINTAHVEYETDTRHYAHVDCPGHADYVKNMITGAAQMDGAILVCAATDGPMAQTKEHILLAKQVGVPALVVALNKCDMVDDEELIELVEMEIRELLSSYDFPGDDIPVVQVSGLKAIEGEAEWEAKIDELMAAVDANIPEPVREVDKPFLMAVEDVFSITGRGTVATGRIERGIVKVGEEIEIVGIKDTRKSTVTGVEMFRKLLDEGMAGDNVGLLLRGIQKEDIERGMVLVKPGSITPHTKFEGEVYVLKKEEGGRHTPFFAGYRPQFYIRTTDVTGQITAFTDRDGGNVEMVMPGDNIKMTGELICPVAIEQGMRFAIREGGRTIGAGVVTKIIE.

A tr-type G domain is found at 10–204; sequence KPHVNIGTIG…AVDANIPEPV (195 aa). The interval 19-26 is G1; it reads GHVDHGKT. 19 to 26 serves as a coordination point for GTP; sequence GHVDHGKT. A Mg(2+)-binding site is contributed by Thr-26. Residues 60 to 64 form a G2 region; that stretch reads GITIN. Residues 81–84 are G3; sequence DCPG. GTP is bound by residues 81–85 and 136–139; these read DCPGH and NKCD. The tract at residues 136–139 is G4; the sequence is NKCD. The segment at 174–176 is G5; the sequence is SGL.

This sequence belongs to the TRAFAC class translation factor GTPase superfamily. Classic translation factor GTPase family. EF-Tu/EF-1A subfamily. In terms of assembly, monomer.

The protein localises to the cytoplasm. It carries out the reaction GTP + H2O = GDP + phosphate + H(+). In terms of biological role, GTP hydrolase that promotes the GTP-dependent binding of aminoacyl-tRNA to the A-site of ribosomes during protein biosynthesis. The chain is Elongation factor Tu from Synechococcus sp. (strain RCC307).